The sequence spans 109 residues: Flagellar hook-basal body complex protein FliE (109 aa).

A disordered region spans residues 1 to 38 (MQAIHNDKSLLSPFSELNTDNRTKREESGSTFKEQKGG). Residues 19–38 (TDNRTKREESGSTFKEQKGG) are compositionally biased toward basic and acidic residues.

It belongs to the FliE family.

It localises to the bacterial flagellum basal body. In Helicobacter pylori (strain P12), this protein is Flagellar hook-basal body complex protein FliE.